A 424-amino-acid polypeptide reads, in one-letter code: DUF21 domain-containing protein At4g33700 (424 aa).

At 1 to 11 (MAVEYVCCSPN) the chain is on the extracellular side. Residues 8–191 (CSPNFFIHIA…GKGGELTHDE (184 aa)) form the CNNM transmembrane domain. A helical transmembrane segment spans residues 12–32 (FFIHIAVIVFLVLFAGLMSGL). At 33-70 (TLGLMSLSLVDLEVLAKSGTPEHRKYAAKILPVVKNQH) the chain is on the cytoplasmic side. Residues 71 to 91 (LLLVTLLICNAAAMETLPIFL) form a helical membrane-spanning segment. The Extracellular segment spans residues 92–94 (DGL). Residues 95–115 (VTAWGAILISVTLILLFGEII) form a helical membrane-spanning segment. Over 116 to 136 (PQSICSRYGLAIGATVAPFVR) the chain is Cytoplasmic. The chain crosses the membrane as a helical span at residues 137 to 157 (VLVFICLPVAWPISKLLDFLL). Topologically, residues 158–424 (GHRRAALFRR…DETDHHFEDS (267 aa)) are extracellular. Residues 210–271 (MTPISDIFVI…TINPDEEIPV (62 aa)) form the CBS 1 domain. N273 and N319 each carry an N-linked (GlcNAc...) asparagine glycan. CBS domains lie at 275–331 (TIRR…DVDS) and 355–416 (PNRA…IFDE). Disordered regions lie at residues 321–340 (SVKE…PQER) and 355–374 (PNRA…SKDN). S331 carries the phosphoserine modification.

Its subcellular location is the membrane. This is DUF21 domain-containing protein At4g33700 (CBSDUF6) from Arabidopsis thaliana (Mouse-ear cress).